The sequence spans 328 residues: Lipoyl synthase (328 aa).

The [4Fe-4S] cluster site is built by Cys-75, Cys-80, Cys-86, Cys-101, Cys-105, Cys-108, and Ser-315. In terms of domain architecture, Radical SAM core spans 87–304 (FNHGTATFMI…EREAKKMGYE (218 aa)).

This sequence belongs to the radical SAM superfamily. Lipoyl synthase family. It depends on [4Fe-4S] cluster as a cofactor.

Its subcellular location is the cytoplasm. It catalyses the reaction [[Fe-S] cluster scaffold protein carrying a second [4Fe-4S](2+) cluster] + N(6)-octanoyl-L-lysyl-[protein] + 2 oxidized [2Fe-2S]-[ferredoxin] + 2 S-adenosyl-L-methionine + 4 H(+) = [[Fe-S] cluster scaffold protein] + N(6)-[(R)-dihydrolipoyl]-L-lysyl-[protein] + 4 Fe(3+) + 2 hydrogen sulfide + 2 5'-deoxyadenosine + 2 L-methionine + 2 reduced [2Fe-2S]-[ferredoxin]. Its pathway is protein modification; protein lipoylation via endogenous pathway; protein N(6)-(lipoyl)lysine from octanoyl-[acyl-carrier-protein]: step 2/2. Catalyzes the radical-mediated insertion of two sulfur atoms into the C-6 and C-8 positions of the octanoyl moiety bound to the lipoyl domains of lipoate-dependent enzymes, thereby converting the octanoylated domains into lipoylated derivatives. This chain is Lipoyl synthase, found in Colwellia psychrerythraea (strain 34H / ATCC BAA-681) (Vibrio psychroerythus).